The primary structure comprises 278 residues: 3-methyl-2-oxobutanoate hydroxymethyltransferase (278 aa).

Mg(2+)-binding residues include D52 and D91. 3-methyl-2-oxobutanoate contacts are provided by residues D52 to S53, D91, and K121. E123 serves as a coordination point for Mg(2+). The active-site Proton acceptor is the E190.

This sequence belongs to the PanB family. As to quaternary structure, homodecamer; pentamer of dimers. It depends on Mg(2+) as a cofactor.

It is found in the cytoplasm. It carries out the reaction 3-methyl-2-oxobutanoate + (6R)-5,10-methylene-5,6,7,8-tetrahydrofolate + H2O = 2-dehydropantoate + (6S)-5,6,7,8-tetrahydrofolate. Its pathway is cofactor biosynthesis; (R)-pantothenate biosynthesis; (R)-pantoate from 3-methyl-2-oxobutanoate: step 1/2. Functionally, catalyzes the reversible reaction in which hydroxymethyl group from 5,10-methylenetetrahydrofolate is transferred onto alpha-ketoisovalerate to form ketopantoate. The polypeptide is 3-methyl-2-oxobutanoate hydroxymethyltransferase (Rhodospirillum rubrum (strain ATCC 11170 / ATH 1.1.1 / DSM 467 / LMG 4362 / NCIMB 8255 / S1)).